The sequence spans 327 residues: MTALYPWLMPIYHQIAQTFDEGLGHHAVLIKADSGLGVESLFNALAQKIMCVAQGDKPCGQCHSCHLMQAHSHPDYHELSPINGKDIGVDQVRDINEMVAQHAQQNGNKVVYVQGAERLTEAAANALLKTLEEPRPNTYFLLQADSSASLLATIYSRCQVWNLSVPNEEIAFEWLKSKSAVENQEILTALAMNLGRPLLALETLQEGFIEQRKNFLRQFWVFYRRRSPLELLPLFDKERYVQQVDWILAFLSDCLKHKLEIDSHRQVADLGRGIEQFSDEQTALGLLQAIKIMQKVRSDLLTINGVNVELMLLDGLTRLVTEVFETQ.

As to quaternary structure, DNA polymerase III contains a core (composed of alpha, epsilon and theta chains) that associates with a tau subunit. This core dimerizes to form the POLIII' complex. PolIII' associates with the gamma complex (composed of gamma, delta, delta', psi and chi chains) and with the beta chain to form the complete DNA polymerase III complex.

It catalyses the reaction DNA(n) + a 2'-deoxyribonucleoside 5'-triphosphate = DNA(n+1) + diphosphate. Its function is as follows. DNA polymerase III is a complex, multichain enzyme responsible for most of the replicative synthesis in bacteria. This DNA polymerase also exhibits 3' to 5' exonuclease activity. The sequence is that of DNA polymerase III subunit delta' (holB) from Haemophilus influenzae (strain ATCC 51907 / DSM 11121 / KW20 / Rd).